Reading from the N-terminus, the 299-residue chain is Biotin transporter (299 aa).

10 helical membrane passes run 2-22 (ALLI…GEYL), 26-46 (VDSY…FLPF), 56-76 (TVGL…MLSF), 81-101 (YLTV…ITLI), 110-130 (LRWG…IIRY), 137-157 (FWTG…GMVG), 172-192 (AFAW…FLLG), 202-222 (LQWG…YFMW), 233-253 (TLGI…LAIW), and 256-276 (QPHW…LWVH). EamA domains follow at residues 3 to 128 (LLII…AGII) and 139 to 274 (TGLL…ASLW).

Belongs to the drug/metabolite transporter (DMT) superfamily. 10 TMS drug/metabolite exporter (DME) (TC 2.A.7.3) family.

It is found in the cell inner membrane. The catalysed reaction is biotin(in) = biotin(out). Uptake of biotin. The sequence is that of Biotin transporter from Escherichia coli O157:H7.